Consider the following 458-residue polypeptide: Forkhead box protein J1-A (458 aa).

Polar residues predominate over residues 68–78 (TGQHTSPSSHS). The disordered stretch occupies residues 68 to 99 (TGQHTSPSSHSHLMGSDAPSSPLAGDPASIGM). Residues 142 to 236 (KPPYSYATLI…LNGAYKKRRL (95 aa)) constitute a DNA-binding region (fork-head). The span at 305–321 (TNKRKQPYNHRTGKTPR) shows a compositional bias: basic residues. The disordered stretch occupies residues 305–324 (TNKRKQPYNHRTGKTPRRSS).

It belongs to the FOXJ1 family. In terms of tissue distribution, expressed in floor plate, dorsal forerunner cells, Kupffers vesicle, the floor plate, pronephric ducts and kidney.

It localises to the nucleus. Key transcription factor required for motile ciliogenesis. Activates genes essential for motile cilia formation and function. Its activity is sufficient for ectopic development of cilia that resemble motile cilia. This is Forkhead box protein J1-A from Danio rerio (Zebrafish).